We begin with the raw amino-acid sequence, 204 residues long: Peptide deformylase (204 aa).

Fe cation contacts are provided by Cys-131 and His-174. Residue Glu-175 is part of the active site. His-178 contributes to the Fe cation binding site.

This sequence belongs to the polypeptide deformylase family. The cofactor is Fe(2+).

It carries out the reaction N-terminal N-formyl-L-methionyl-[peptide] + H2O = N-terminal L-methionyl-[peptide] + formate. Its function is as follows. Removes the formyl group from the N-terminal Met of newly synthesized proteins. Requires at least a dipeptide for an efficient rate of reaction. N-terminal L-methionine is a prerequisite for activity but the enzyme has broad specificity at other positions. This chain is Peptide deformylase, found in Streptococcus equi subsp. zooepidemicus (strain MGCS10565).